A 380-amino-acid polypeptide reads, in one-letter code: MAPNPRKSHPLLKMVNNSLIDLPTPSNISAWWNFGSLLALCLMTQILTGLLLAMHYTADTTLAFSSVAHTCRNVQYGWLIRNMHANGASFFFICIYMHIGRGFYYGSYLHKETWNTGILLLLTLMATAFVGYVLPWGQMSFWGATVITNMFSAIPYIGQTIVEWAWGGFSVDNPTLTRFFALHFLLPFMIAGLTLIHLTFLHESGSNNPLGIVSNCDKIPFHPYYSLKDILGLTLLLLPLTTMALFSPNLLGDPENFTPANPLVTPPHIKPEWYFLFAYAILRSIPNKLGGVLALAASVLVLFLSPLLHKSKQRTMAFRPLSQLLFWTLVANLLILTWIGSQPVEHPFIIIGQLASTTYFIILLILFPITSALENKMLNF.

4 helical membrane passes run 34 to 54, 78 to 99, 114 to 134, and 179 to 199; these read FGSLLALCLMTQILTGLLLAM, WLIRNMHANGASFFFICIYMHI, WNTGILLLLTLMATAFVGYVL, and FFALHFLLPFMIAGLTLIHLT. 2 residues coordinate heme b: His-84 and His-98. Residues His-183 and His-197 each coordinate heme b. A ubiquinone is bound at residue His-202. Transmembrane regions (helical) follow at residues 227–247, 289–309, 321–341, and 348–368; these read LKDILGLTLLLLPLTTMALFS, LGGVLALAASVLVLFLSPLLH, LSQLLFWTLVANLLILTWIGS, and FIIIGQLASTTYFIILLILFP.

This sequence belongs to the cytochrome b family. The cytochrome bc1 complex contains 11 subunits: 3 respiratory subunits (MT-CYB, CYC1 and UQCRFS1), 2 core proteins (UQCRC1 and UQCRC2) and 6 low-molecular weight proteins (UQCRH/QCR6, UQCRB/QCR7, UQCRQ/QCR8, UQCR10/QCR9, UQCR11/QCR10 and a cleavage product of UQCRFS1). This cytochrome bc1 complex then forms a dimer. Heme b serves as cofactor.

It is found in the mitochondrion inner membrane. Component of the ubiquinol-cytochrome c reductase complex (complex III or cytochrome b-c1 complex) that is part of the mitochondrial respiratory chain. The b-c1 complex mediates electron transfer from ubiquinol to cytochrome c. Contributes to the generation of a proton gradient across the mitochondrial membrane that is then used for ATP synthesis. This Hydrobates pelagicus (European storm-petrel) protein is Cytochrome b (MT-CYB).